Consider the following 100-residue polypeptide: NADH-quinone oxidoreductase subunit K (100 aa).

3 helical membrane passes run 2-22 (VTLN…LVGV), 28-48 (LLML…GLVA), and 63-83 (FFII…LILW).

This sequence belongs to the complex I subunit 4L family. NDH-1 is composed of 14 different subunits. Subunits NuoA, H, J, K, L, M, N constitute the membrane sector of the complex.

It localises to the cell inner membrane. The enzyme catalyses a quinone + NADH + 5 H(+)(in) = a quinol + NAD(+) + 4 H(+)(out). NDH-1 shuttles electrons from NADH, via FMN and iron-sulfur (Fe-S) centers, to quinones in the respiratory chain. The immediate electron acceptor for the enzyme in this species is believed to be ubiquinone. Couples the redox reaction to proton translocation (for every two electrons transferred, four hydrogen ions are translocated across the cytoplasmic membrane), and thus conserves the redox energy in a proton gradient. The polypeptide is NADH-quinone oxidoreductase subunit K (Wolinella succinogenes (strain ATCC 29543 / DSM 1740 / CCUG 13145 / JCM 31913 / LMG 7466 / NCTC 11488 / FDC 602W) (Vibrio succinogenes)).